The following is a 143-amino-acid chain: MAIERTFSIIKPNAVAKNVIGSIFARFESAGFKIIGTKMLHLTVEQARGFYAEHEGKPFFDGLVEFMTSGPIVVSVLESENAVQRHRDLLGATNPANALAGTLRADYADSFTENGTHGSDSVESANREIAYFFGEGEICPRTR.

ATP contacts are provided by Lys-11, Phe-59, Arg-87, Thr-93, Arg-104, and Asn-114. The active-site Pros-phosphohistidine intermediate is His-117.

The protein belongs to the NDK family. In terms of assembly, homotetramer. Mg(2+) serves as cofactor.

The protein localises to the cytoplasm. It catalyses the reaction a 2'-deoxyribonucleoside 5'-diphosphate + ATP = a 2'-deoxyribonucleoside 5'-triphosphate + ADP. The catalysed reaction is a ribonucleoside 5'-diphosphate + ATP = a ribonucleoside 5'-triphosphate + ADP. Its function is as follows. Major role in the synthesis of nucleoside triphosphates other than ATP. The ATP gamma phosphate is transferred to the NDP beta phosphate via a ping-pong mechanism, using a phosphorylated active-site intermediate. The chain is Nucleoside diphosphate kinase from Cronobacter sakazakii (strain ATCC BAA-894) (Enterobacter sakazakii).